The following is a 265-amino-acid chain: Secreted RxLR effector protein 146 (265 aa).

The signal sequence occupies residues 1–25 (MRYYTQVVAASLVATLAVVDSIVFA). Residues 32–50 (RFLRQDGATVTRGGKGEER) carry the RxLR-dEER motif. N-linked (GlcNAc...) asparagine glycosylation is found at Asn-71 and Asn-148.

The protein belongs to the RxLR effector family.

It is found in the secreted. It localises to the host nucleus. The protein resides in the host cytoplasm. In terms of biological role, secreted effector that completely suppresses the host cell death induced by cell death-inducing proteins. The protein is Secreted RxLR effector protein 146 of Plasmopara viticola (Downy mildew of grapevine).